The following is a 510-amino-acid chain: MWLTLITGALILLLTWDFGRKRQRVLAFEKSAIPGPISIPILGCGLQALHLGAENIIGWVGEKFDKYGKTFRFWILGESLIYTKDLQYFETILSSTTLLEKGQLYEYLRPFLNDGLLVSTGRKWHARRKIFTHAFHFKVLEHYVEIMDRHSSVMVDNLRKVADGKTAVDMLKYVSLAALDVITEAAMGVQVNAQNDPDFPYIKALKSVVYIQPDRMFRFSRRYNWLFPLAAPLLHRQLLSDIRVMHDFTDKVISERRETVRRAKADGTYRPLSLGDAEIGSKSQMALLDILLQSSINNQPLSDADIREEVDTFMFEGDDTTSSGVSHALYAIARHPEVQQRIFEELQRVLGPDASAPVTQAQLQDLKYLDCVIKETMRLYPPVPAIGRHAQKELEIGDKTIPANTSIYLVLYYAHRDANYFPDPLSFRPERFLEDQEQGHNTFAYVPFSAGPKNCIGQKFAVLEMKVLISKVLRFYELLPLGEELKPMLNFILRSASGINVGLRPRKALR.

Residue Cys-455 coordinates heme.

Belongs to the cytochrome P450 family. Heme is required as a cofactor.

The protein localises to the endoplasmic reticulum membrane. It is found in the microsome membrane. May be involved in the metabolism of insect hormones and in the breakdown of synthetic insecticides. The chain is Probable cytochrome P450 4d20 (Cyp4d20) from Drosophila melanogaster (Fruit fly).